A 369-amino-acid polypeptide reads, in one-letter code: 2-aminoethylphosphonate--pyruvate transaminase (369 aa).

The residue at position 193 (K193) is an N6-(pyridoxal phosphate)lysine.

It belongs to the class-V pyridoxal-phosphate-dependent aminotransferase family. PhnW subfamily. In terms of assembly, homodimer. Requires pyridoxal 5'-phosphate as cofactor.

It carries out the reaction (2-aminoethyl)phosphonate + pyruvate = phosphonoacetaldehyde + L-alanine. In terms of biological role, involved in phosphonate degradation. The chain is 2-aminoethylphosphonate--pyruvate transaminase from Burkholderia pseudomallei (strain 668).